Here is a 419-residue protein sequence, read N- to C-terminus: POU domain, class 4, transcription factor 1 (419 aa).

A POU-IV box motif is present at residues Arg57–Ile66. Disordered regions lie at residues Ser94–Leu117 and Ala131–Gly197. The span at Ala99–His108 shows a compositional bias: basic residues. Over residues Ala131–Gly184 the composition is skewed to gly residues. The region spanning Ser261–Gly338 is the POU-specific domain. A DNA-binding region (homeobox) is located at residues Lys356–Phe415.

It belongs to the POU transcription factor family. Class-4 subfamily. As to quaternary structure, interacts (via N-terminus) with RIT2; the interaction controls POU4F1 transactivation activity on some neuronal target genes. Isoform 1 interacts with POU4F2; this interaction inhibits both POU4F1 DNA-binding and transcriptional activities. Isoform 1 interacts (C-terminus) with ESR1 (via DNA-binding domain); this interaction decreases the estrogen receptor ESR1 transcriptional activity in a DNA- and ligand 17-beta-estradiol-independent manner. In terms of tissue distribution, expressed in the brain and the retina. Present in the developing brain, spinal cord and eye.

Its subcellular location is the nucleus. The protein localises to the cytoplasm. In terms of biological role, multifunctional transcription factor with different regions mediating its different effects. Acts by binding (via its C-terminal domain) to sequences related to the consensus octamer motif 5'-ATGCAAAT-3' in the regulatory regions of its target genes. Regulates the expression of specific genes involved in differentiation and survival within a subset of neuronal lineages. It has been shown that activation of some of these genes requires its N-terminal domain, maybe through a neuronal-specific cofactor. Activates BCL2 expression and protects neuronal cells from apoptosis (via the N-terminal domain). Induces neuronal process outgrowth and the coordinate expression of genes encoding synaptic proteins. Exerts its major developmental effects in somatosensory neurons and in brainstem nuclei involved in motor control. Stimulates the binding affinity of the nuclear estrogene receptor ESR1 to DNA estrogen response element (ERE), and hence modulates ESR1-induced transcriptional activity. May positively regulate POU4F2 and POU4F3. Regulates dorsal root ganglion sensory neuron specification and axonal projection into the spinal cord. Plays a role in TNFSF11-mediated terminal osteoclast differentiation. Negatively regulates its own expression interacting directly with a highly conserved autoregulatory domain surrounding the transcription initiation site. Functionally, able to act as transcription factor, cannot regulate the expression of the same subset of genes than isoform 1. Does not have antiapoptotic effect on neuronal cells. In Homo sapiens (Human), this protein is POU domain, class 4, transcription factor 1.